Here is a 178-residue protein sequence, read N- to C-terminus: Large ribosomal subunit protein uL6 (178 aa).

Belongs to the universal ribosomal protein uL6 family. Part of the 50S ribosomal subunit.

In terms of biological role, this protein binds to the 23S rRNA, and is important in its secondary structure. It is located near the subunit interface in the base of the L7/L12 stalk, and near the tRNA binding site of the peptidyltransferase center. The chain is Large ribosomal subunit protein uL6 from Helicobacter pylori (strain J99 / ATCC 700824) (Campylobacter pylori J99).